A 177-amino-acid chain; its full sequence is uncharacterized protein (177 aa).

This is an uncharacterized protein from Homo sapiens (Human).